We begin with the raw amino-acid sequence, 333 residues long: MGSTYSEWNQRATLWLQSKMGRRARIGLLAATVVGYPIGSILINGPFVNFTFPKRYSVEPLPEHLVPIADQEYGRFLDRESRIPKDAVVSVQIQRSMTNSDETVASGSLGVRTGLNLAVPMYSRFKNAQEALDYFKSQNPEGMDFLGERVPIRWDSEIAEEFTDCYAFSDNAHHFLFLRDLYAYDGYASLAQRSISWATWTTFSSIFTYWIHNSSRIMGGSAASFAIAYPILLGAAWYANKQWHLLYRYLTDIHADAEAARASFEHAEGGKEYYWKMLKRNRIMRDIKPSLWNQITATGDIRGIATPIITRYDHLKDVNEEDDELKAVIGMDD.

This is an uncharacterized protein from Caenorhabditis elegans.